We begin with the raw amino-acid sequence, 266 residues long: ATP synthase subunit a (266 aa).

A run of 6 helical transmembrane segments spans residues 38–58 (KQML…LLAA), 99–119 (LLFS…IPLI), 126–146 (HVGG…AIGV), 162–182 (GVPV…NFLV), 191–211 (LFAT…GIEY), and 224–244 (SVLV…IMAL).

The protein belongs to the ATPase A chain family. In terms of assembly, F-type ATPases have 2 components, CF(1) - the catalytic core - and CF(0) - the membrane proton channel. CF(1) has five subunits: alpha(3), beta(3), gamma(1), delta(1), epsilon(1). CF(0) has three main subunits: a(1), b(2) and c(9-12). The alpha and beta chains form an alternating ring which encloses part of the gamma chain. CF(1) is attached to CF(0) by a central stalk formed by the gamma and epsilon chains, while a peripheral stalk is formed by the delta and b chains.

The protein localises to the cell membrane. Functionally, key component of the proton channel; it plays a direct role in the translocation of protons across the membrane. The chain is ATP synthase subunit a from Arthrobacter sp. (strain FB24).